A 424-amino-acid polypeptide reads, in one-letter code: 26S proteasome regulatory subunit 6A homolog A (424 aa).

Residues 1–21 are disordered; it reads MATPMVEDTSSFEEDQLASMS. A2 is subject to N-acetylalanine. S19 carries the post-translational modification Phosphoserine. Residue 212 to 219 coordinates ATP; it reads GPPGTGKT. A Glycyl lysine isopeptide (Lys-Gly) (interchain with G-Cter in ubiquitin) cross-link involves residue K235. T278 is modified (O-acetylthreonine). Glycyl lysine isopeptide (Lys-Gly) (interchain with G-Cter in ubiquitin) cross-links involve residues K279 and K416.

This sequence belongs to the AAA ATPase family. As to quaternary structure, component of the 19S regulatory particle (RP/PA700) base subcomplex of the 26S proteasome. The 26S proteasome is composed of a core protease (CP), known as the 20S proteasome, capped at one or both ends by the 19S regulatory particle (RP/PA700). The RP/PA700 complex is composed of at least 17 different subunits in two subcomplexes, the base and the lid, which form the portions proximal and distal to the 20S proteolytic core, respectively. As to expression, ubiquitous.

The protein localises to the cytoplasm. It is found in the nucleus. In terms of biological role, the 26S proteasome is involved in the ATP-dependent degradation of ubiquitinated proteins. The regulatory (or ATPase) complex confers ATP dependency and substrate specificity to the 26S complex. Interacts with transit peptides of proteins targeted to the chloroplast, and may be involved in the degradation of unimported plastid protein precursors. Plays a essential role in the gametophyte development. Involved in tolerance to zinc deficiency, possibly through alleviation of oxidative stresses or processing of poly-ubiquitinated proteins. The protein is 26S proteasome regulatory subunit 6A homolog A of Arabidopsis thaliana (Mouse-ear cress).